The chain runs to 184 residues: Guanylate kinase (184 aa).

Residues 5–183 form the Guanylate kinase-like domain; that stretch reads NGLIVITGPS…ALLEIKKLIK (179 aa). Position 12–19 (12–19) interacts with ATP; the sequence is GPSGVGKG.

This sequence belongs to the guanylate kinase family.

The protein localises to the cytoplasm. The catalysed reaction is GMP + ATP = GDP + ADP. In terms of biological role, essential for recycling GMP and indirectly, cGMP. In Prochlorococcus marinus (strain SARG / CCMP1375 / SS120), this protein is Guanylate kinase.